Consider the following 321-residue polypeptide: MRIGQYQLRNRLIAAPMAGITDRPFRTLCYEMGAGLTVSEMMSSNPQVWESDKSRLRMVHIDEPGIRTVQIAGSAPKEMADAARINVESGAQIIDINMGCPAKKVNRKLAGSALLQYPDVVKSILTEVVNAVDVPVTLKIRTGWAPEHRNCEEIAQLAEDCGIQALTIHGRTRACLFNGEAEYDSIRAVKQKVSIPVIANGDITDPLKARAVLDYTGADALMIGRAAQGRPWIFREIQHYLDTGELLPPLPLAEVKRLLCAHVRELHDFYGPAKGYRIARKHVSWYLQEHAPNDQFRRTFNAIEDASEQLEALEAYFENFA.

FMN is bound by residues 16 to 18 (PMA) and Q70. C100 (proton donor) is an active-site residue. FMN-binding positions include K139, 200 to 202 (NGD), and 224 to 225 (GR).

Belongs to the Dus family. DusB subfamily. The cofactor is FMN.

The enzyme catalyses a 5,6-dihydrouridine in tRNA + NAD(+) = a uridine in tRNA + NADH + H(+). The catalysed reaction is a 5,6-dihydrouridine in tRNA + NADP(+) = a uridine in tRNA + NADPH + H(+). Its function is as follows. Catalyzes the synthesis of 5,6-dihydrouridine (D), a modified base found in the D-loop of most tRNAs, via the reduction of the C5-C6 double bond in target uridines. This Shigella flexneri protein is tRNA-dihydrouridine synthase B.